We begin with the raw amino-acid sequence, 450 residues long: UDP-N-acetylmuramate--L-alanine ligase (450 aa).

112–118 (GTHGKTT) serves as a coordination point for ATP.

This sequence belongs to the MurCDEF family.

The protein localises to the cytoplasm. The catalysed reaction is UDP-N-acetyl-alpha-D-muramate + L-alanine + ATP = UDP-N-acetyl-alpha-D-muramoyl-L-alanine + ADP + phosphate + H(+). Its pathway is cell wall biogenesis; peptidoglycan biosynthesis. Cell wall formation. This is UDP-N-acetylmuramate--L-alanine ligase from Endomicrobium trichonymphae.